Consider the following 173-residue polypeptide: Galactose-6-phosphate isomerase subunit LacB (173 aa).

This sequence belongs to the LacAB/RpiB family. Heteromultimeric protein consisting of LacA and LacB.

The enzyme catalyses aldehydo-D-galactose 6-phosphate = keto-D-tagatose 6-phosphate. It functions in the pathway carbohydrate metabolism; D-galactose 6-phosphate degradation; D-tagatose 6-phosphate from D-galactose 6-phosphate: step 1/1. The polypeptide is Galactose-6-phosphate isomerase subunit LacB (Clostridium acetobutylicum (strain ATCC 824 / DSM 792 / JCM 1419 / IAM 19013 / LMG 5710 / NBRC 13948 / NRRL B-527 / VKM B-1787 / 2291 / W)).